The following is a 322-amino-acid chain: Malate dehydrogenase (322 aa).

Residues 10–15 (GSGQIG) and Asp34 each bind NAD(+). Arg83 and Arg89 together coordinate substrate. NAD(+) contacts are provided by residues Asn96 and 119–121 (ITN). 2 residues coordinate substrate: Asn121 and Arg152. Residue His176 is the Proton acceptor of the active site.

Belongs to the LDH/MDH superfamily. MDH type 3 family.

It catalyses the reaction (S)-malate + NAD(+) = oxaloacetate + NADH + H(+). In terms of biological role, catalyzes the reversible oxidation of malate to oxaloacetate. This Bradyrhizobium sp. (strain ORS 278) protein is Malate dehydrogenase.